The sequence spans 156 residues: Regulatory protein RecX (156 aa).

This sequence belongs to the RecX family.

The protein resides in the cytoplasm. Its function is as follows. Modulates RecA activity. This Pseudomonas putida (strain ATCC 700007 / DSM 6899 / JCM 31910 / BCRC 17059 / LMG 24140 / F1) protein is Regulatory protein RecX.